The following is a 179-amino-acid chain: ADP-ribosylation factor 1-like 1 (179 aa).

A lipid anchor (N-myristoyl glycine) is attached at Gly-2. Positions 3-16 (LFFSKISSFMFPNI) are important for the stable binding to the membranes. GTP contacts are provided by residues 24–32 (GLDGAGKTT), 126–129 (NKQD), and Ala-160.

Belongs to the small GTPase superfamily. Arf family.

It is found in the golgi apparatus membrane. It catalyses the reaction GTP + H2O = GDP + phosphate + H(+). Its activity is regulated as follows. Alternates between an inactive GDP-bound form and an active GTP-bound form. Activated by a guanine nucleotide-exchange factor (GEF) and inactivated by GTPase-activating protein (GAP). In terms of biological role, small GTPase involved in protein trafficking between different compartments. Modulates vesicle budding and uncoating within the Golgi complex. In its GTP-bound form, triggers the recruitment of coatomer proteins to the Golgi membrane. The hydrolysis of ARF1-bound GTP, which is mediated by ARFGAPs proteins, is required for dissociation of coat proteins from Golgi membranes and vesicles. The sequence is that of ADP-ribosylation factor 1-like 1 (arf-1.1) from Caenorhabditis elegans.